The following is a 157-amino-acid chain: Glycine-rich RNA-binding, abscisic acid-inducible protein (157 aa).

The RRM domain maps to 8–86 (YRCFVGGLAW…RNITVNQAQS (79 aa)). The segment at 82-157 (NQAQSRGGGG…YGGGGGGWRD (76 aa)) is disordered. Positions 87-157 (RGGGGGGGGY…YGGGGGGWRD (71 aa)) are enriched in gly residues.

Its function is as follows. Possibly has a role in RNA transcription or processing during stress. In Zea mays (Maize), this protein is Glycine-rich RNA-binding, abscisic acid-inducible protein (RAB15).